Reading from the N-terminus, the 788-residue chain is Patatin-like phospholipase domain-containing protein DEHA2B04136g (788 aa).

A helical membrane pass occupies residues 136-156; sequence WPILIFISCWISLLCFMYIIV. Positions 311–503 constitute a PNPLA domain; it reads LCLSGGACFT…RTDIPIDALN (193 aa). Residues 342 to 346 carry the GXSXG motif; it reads GTSGG. Residue Ser-344 is the Nucleophile of the active site. Residue Asp-490 is the Proton acceptor of the active site. Positions 662-672 are enriched in polar residues; the sequence is ANFNTLTSSDS. A disordered region spans residues 662 to 771; the sequence is ANFNTLTSSD…DTGSRFLKSF (110 aa). Composition is skewed to acidic residues over residues 690–705 and 723–749; these read MFDD…DDEV and EDGD…DEAN.

The protein belongs to the PLPL family.

The protein localises to the membrane. Probable lipid hydrolase. The protein is Patatin-like phospholipase domain-containing protein DEHA2B04136g of Debaryomyces hansenii (strain ATCC 36239 / CBS 767 / BCRC 21394 / JCM 1990 / NBRC 0083 / IGC 2968) (Yeast).